The chain runs to 861 residues: Probable linoleate 9S-lipoxygenase 3 (861 aa).

Residues 33-160 (FTDLASSLTG…NYKSDRIFFA (128 aa)) form the PLAT domain. A Lipoxygenase domain is found at 163–861 (PYLPSDTPEL…GKGIPNSVSI (699 aa)). The disordered stretch occupies residues 220 to 247 (TLGGSAEYPYPRRGRTGRPPTRTDPKSE). Residues histidine 522, histidine 527, histidine 713, asparagine 717, and isoleucine 861 each coordinate Fe cation.

Belongs to the lipoxygenase family. Monomer. Fe cation is required as a cofactor. Expressed in tubers and roots. Not detected in leaves, flowers, stems, shoot tips, or axillary buds.

It localises to the cytoplasm. It carries out the reaction (9Z,12Z)-octadecadienoate + O2 = (9S)-hydroperoxy-(10E,12Z)-octadecadienoate. Its pathway is lipid metabolism; oxylipin biosynthesis. Plant lipoxygenases may be involved in a number of diverse aspects of plant physiology including growth and development, pest resistance, and senescence or responses to wounding. Catalyzes the hydroperoxidation of lipids containing a cis,cis-1,4-pentadiene structure. This chain is Probable linoleate 9S-lipoxygenase 3 (LOX1.3), found in Solanum tuberosum (Potato).